A 162-amino-acid polypeptide reads, in one-letter code: Crossover junction endodeoxyribonuclease RuvC (162 aa).

Active-site residues include aspartate 7, glutamate 67, and aspartate 140. Mg(2+) is bound by residues aspartate 7, glutamate 67, and aspartate 140.

It belongs to the RuvC family. In terms of assembly, homodimer which binds Holliday junction (HJ) DNA. The HJ becomes 2-fold symmetrical on binding to RuvC with unstacked arms; it has a different conformation from HJ DNA in complex with RuvA. In the full resolvosome a probable DNA-RuvA(4)-RuvB(12)-RuvC(2) complex forms which resolves the HJ. It depends on Mg(2+) as a cofactor.

The protein resides in the cytoplasm. It carries out the reaction Endonucleolytic cleavage at a junction such as a reciprocal single-stranded crossover between two homologous DNA duplexes (Holliday junction).. Functionally, the RuvA-RuvB-RuvC complex processes Holliday junction (HJ) DNA during genetic recombination and DNA repair. Endonuclease that resolves HJ intermediates. Cleaves cruciform DNA by making single-stranded nicks across the HJ at symmetrical positions within the homologous arms, yielding a 5'-phosphate and a 3'-hydroxyl group; requires a central core of homology in the junction. The consensus cleavage sequence is 5'-(A/T)TT(C/G)-3'. Cleavage occurs on the 3'-side of the TT dinucleotide at the point of strand exchange. HJ branch migration catalyzed by RuvA-RuvB allows RuvC to scan DNA until it finds its consensus sequence, where it cleaves and resolves the cruciform DNA. The chain is Crossover junction endodeoxyribonuclease RuvC from Pseudothermotoga lettingae (strain ATCC BAA-301 / DSM 14385 / NBRC 107922 / TMO) (Thermotoga lettingae).